The following is a 248-amino-acid chain: Probable transcriptional regulatory protein Bind_0345 (248 aa).

It belongs to the TACO1 family.

The protein resides in the cytoplasm. The protein is Probable transcriptional regulatory protein Bind_0345 of Beijerinckia indica subsp. indica (strain ATCC 9039 / DSM 1715 / NCIMB 8712).